Consider the following 382-residue polypeptide: Dual-specificity RNA methyltransferase RlmN (382 aa).

Glu-95 serves as the catalytic Proton acceptor. The Radical SAM core domain occupies Glu-101–Asp-347. The cysteines at positions 108 and 352 are disulfide-linked. The [4Fe-4S] cluster site is built by Cys-115, Cys-119, and Cys-122. S-adenosyl-L-methionine is bound by residues Gly-178–Glu-179, Ser-210, Ser-232–His-234, and Asn-309. The S-methylcysteine intermediate role is filled by Cys-352.

Belongs to the radical SAM superfamily. RlmN family. It depends on [4Fe-4S] cluster as a cofactor.

Its subcellular location is the cytoplasm. It catalyses the reaction adenosine(2503) in 23S rRNA + 2 reduced [2Fe-2S]-[ferredoxin] + 2 S-adenosyl-L-methionine = 2-methyladenosine(2503) in 23S rRNA + 5'-deoxyadenosine + L-methionine + 2 oxidized [2Fe-2S]-[ferredoxin] + S-adenosyl-L-homocysteine. The enzyme catalyses adenosine(37) in tRNA + 2 reduced [2Fe-2S]-[ferredoxin] + 2 S-adenosyl-L-methionine = 2-methyladenosine(37) in tRNA + 5'-deoxyadenosine + L-methionine + 2 oxidized [2Fe-2S]-[ferredoxin] + S-adenosyl-L-homocysteine. Its function is as follows. Specifically methylates position 2 of adenine 2503 in 23S rRNA and position 2 of adenine 37 in tRNAs. m2A2503 modification seems to play a crucial role in the proofreading step occurring at the peptidyl transferase center and thus would serve to optimize ribosomal fidelity. The sequence is that of Dual-specificity RNA methyltransferase RlmN from Bordetella avium (strain 197N).